We begin with the raw amino-acid sequence, 282 residues long: tRNA pseudouridine synthase B (282 aa).

Catalysis depends on Asp39, which acts as the Nucleophile.

The protein belongs to the pseudouridine synthase TruB family. Type 1 subfamily.

The enzyme catalyses uridine(55) in tRNA = pseudouridine(55) in tRNA. In terms of biological role, responsible for synthesis of pseudouridine from uracil-55 in the psi GC loop of transfer RNAs. This is tRNA pseudouridine synthase B from Borrelia garinii subsp. bavariensis (strain ATCC BAA-2496 / DSM 23469 / PBi) (Borreliella bavariensis).